The primary structure comprises 207 residues: Guanylate kinase (207 aa).

A Guanylate kinase-like domain is found at 5–184 (GNLFIVSAPS…ALADLSAIIR (180 aa)). An ATP-binding site is contributed by 12 to 19 (APSGAGKS). Residues 30-49 (PSDKQVSVSHTTRKPRPGEV) are disordered.

It belongs to the guanylate kinase family.

It localises to the cytoplasm. It carries out the reaction GMP + ATP = GDP + ADP. Essential for recycling GMP and indirectly, cGMP. In Shewanella frigidimarina (strain NCIMB 400), this protein is Guanylate kinase.